The sequence spans 47 residues: Delta-stichotoxin-Hcr1d (47 aa).

Cystine bridges form between Cys-3–Cys-43, Cys-5–Cys-33, and Cys-26–Cys-44.

Belongs to the sea anemone sodium channel inhibitory toxin family. Type II subfamily.

The protein resides in the secreted. The protein localises to the nematocyst. Its function is as follows. Binds to site 3 of voltage-gated sodium channels and inhibits the inactivation process. The chain is Delta-stichotoxin-Hcr1d from Radianthus crispa (Leathery sea anemone).